The sequence spans 858 residues: Phospholipase D gamma 1 (858 aa).

The C2 domain maps to P27–F163. Residue D225 coordinates Ca(2+). In terms of domain architecture, PLD phosphodiesterase 1 spans T364–R399. Active-site residues include H369, K371, and D376. H369 provides a ligand contact to a 1,2-diacyl-sn-glycero-3-phosphate. The Ca(2+) site is built by H405 and H437. Q565 is a binding site for a 1,2-diacyl-sn-glycero-3-phosphate. At S680 the chain carries Phosphoserine. A PLD phosphodiesterase 2 domain is found at F704–S731. Residues H709, K711, and D716 contribute to the active site. H709 serves as a coordination point for a 1,2-diacyl-sn-glycero-3-phosphate. Residue E772 coordinates Ca(2+).

This sequence belongs to the phospholipase D family. C2-PLD subfamily. The cofactor is Ca(2+). Highly expressed in roots and flowers, moderately in stems, leaves and seedlings and low in siliques. Not detected in seeds.

The protein localises to the cytoplasm. It localises to the membrane. It catalyses the reaction a 1,2-diacyl-sn-glycero-3-phosphocholine + H2O = a 1,2-diacyl-sn-glycero-3-phosphate + choline + H(+). With respect to regulation, inhibited by neomycin. Up-regulated by PIP2 binding. In terms of biological role, hydrolyzes glycerol-phospholipids at the terminal phosphodiesteric bond to generate phosphatidic acids (PA). Plays an important role in various cellular processes, including phytohormone action, vesicular trafficking, secretion, cytoskeletal arrangement, meiosis, tumor promotion, pathogenesis, membrane deterioration and senescence. Can use phosphatidylserine (PS) and phosphatidylethanolamine (PE) as substrates only in the presence of PIP2. Can use phosphatidylcholine (PC), phosphatidylglycerol (PG) or N-acylphosphatidylethanolamine (NAPE) as substrates in the presence of PE and PIP2. Involved in membrane lipid modulation under aluminum (Al) stress and negatively modulate plant tolerance to Al. The sequence is that of Phospholipase D gamma 1 from Arabidopsis thaliana (Mouse-ear cress).